Here is an 80-residue protein sequence, read N- to C-terminus: RNA-binding protein Hfq (80 aa).

The Sm domain maps to 10-69; that stretch reads DPFLNTLRREHVPVSIYLVNGIKLQGQIESFDQYVVLLKNTVTQMVYKHAISTVVPARPV.

The protein belongs to the Hfq family. Homohexamer.

Functionally, RNA chaperone that binds small regulatory RNA (sRNAs) and mRNAs to facilitate mRNA translational regulation in response to envelope stress, environmental stress and changes in metabolite concentrations. Also binds with high specificity to tRNAs. The chain is RNA-binding protein Hfq from Azoarcus sp. (strain BH72).